Reading from the N-terminus, the 127-residue chain is Nitrogenase-stabilizing/protective protein NifW (127 aa).

This sequence belongs to the NifW family. As to quaternary structure, homotrimer; associates with NifD.

Functionally, may protect the nitrogenase Fe-Mo protein from oxidative damage. This Rhizobium etli (strain ATCC 51251 / DSM 11541 / JCM 21823 / NBRC 15573 / CFN 42) protein is Nitrogenase-stabilizing/protective protein NifW.